Here is a 257-residue protein sequence, read N- to C-terminus: tRNA pseudouridine synthase A (257 aa).

The active-site Nucleophile is aspartate 43. Position 94 (tyrosine 94) interacts with substrate.

It belongs to the tRNA pseudouridine synthase TruA family.

The enzyme catalyses uridine(38/39/40) in tRNA = pseudouridine(38/39/40) in tRNA. Formation of pseudouridine at positions 38, 39 and 40 in the anticodon stem and loop of transfer RNAs. The sequence is that of tRNA pseudouridine synthase A from Pyrobaculum arsenaticum (strain DSM 13514 / JCM 11321 / PZ6).